A 124-amino-acid chain; its full sequence is Holo-[acyl-carrier-protein] synthase (124 aa).

The Mg(2+) site is built by Asp8 and Glu56.

It belongs to the P-Pant transferase superfamily. AcpS family. It depends on Mg(2+) as a cofactor.

Its subcellular location is the cytoplasm. The catalysed reaction is apo-[ACP] + CoA = holo-[ACP] + adenosine 3',5'-bisphosphate + H(+). In terms of biological role, transfers the 4'-phosphopantetheine moiety from coenzyme A to a Ser of acyl-carrier-protein. This Nitratidesulfovibrio vulgaris (strain DP4) (Desulfovibrio vulgaris) protein is Holo-[acyl-carrier-protein] synthase.